The primary structure comprises 89 residues: Small ribosomal subunit protein uS15 (89 aa).

This sequence belongs to the universal ribosomal protein uS15 family. As to quaternary structure, part of the 30S ribosomal subunit. Forms a bridge to the 50S subunit in the 70S ribosome, contacting the 23S rRNA.

Its function is as follows. One of the primary rRNA binding proteins, it binds directly to 16S rRNA where it helps nucleate assembly of the platform of the 30S subunit by binding and bridging several RNA helices of the 16S rRNA. Functionally, forms an intersubunit bridge (bridge B4) with the 23S rRNA of the 50S subunit in the ribosome. The polypeptide is Small ribosomal subunit protein uS15 (Synechocystis sp. (strain ATCC 27184 / PCC 6803 / Kazusa)).